A 195-amino-acid polypeptide reads, in one-letter code: Interferon omega-1 (195 aa).

Residues 1–23 (MAFVLSLLMALVLVSYGPGGSLG) form the signal peptide. 2 cysteine pairs are disulfide-bonded: Cys24/Cys122 and Cys52/Cys162.

Belongs to the alpha/beta interferon family.

The protein resides in the secreted. This Bos taurus (Bovine) protein is Interferon omega-1 (IFNW1).